The primary structure comprises 511 residues: Apolipoprotein N-acyltransferase (511 aa).

The next 6 helical transmembrane spans lie at 7 to 29 (PGWP…LAPF), 58 to 78 (GWWY…VSIH), 90 to 110 (LLML…AWLW), 125 to 145 (LAFA…LTGF), 163 to 183 (VPVG…ALLV), and 192 to 212 (GASL…GLYL). Residues 230 to 470 (IQGNIAQELK…QGILRGEVIP (241 aa)) enclose the CN hydrolase domain. Glutamate 269 functions as the Proton acceptor in the catalytic mechanism. Lysine 330 is an active-site residue. Catalysis depends on cysteine 382, which acts as the Nucleophile. Residues 482-502 (VWPLAGLAGVLLLWALLGRQL) traverse the membrane as a helical segment.

This sequence belongs to the CN hydrolase family. Apolipoprotein N-acyltransferase subfamily.

The protein resides in the cell inner membrane. The catalysed reaction is N-terminal S-1,2-diacyl-sn-glyceryl-L-cysteinyl-[lipoprotein] + a glycerophospholipid = N-acyl-S-1,2-diacyl-sn-glyceryl-L-cysteinyl-[lipoprotein] + a 2-acyl-sn-glycero-3-phospholipid + H(+). It functions in the pathway protein modification; lipoprotein biosynthesis (N-acyl transfer). Its function is as follows. Catalyzes the phospholipid dependent N-acylation of the N-terminal cysteine of apolipoprotein, the last step in lipoprotein maturation. The protein is Apolipoprotein N-acyltransferase of Pseudomonas aeruginosa (strain ATCC 15692 / DSM 22644 / CIP 104116 / JCM 14847 / LMG 12228 / 1C / PRS 101 / PAO1).